A 415-amino-acid chain; its full sequence is Maintenance of mitochondrial morphology protein 1 (415 aa).

Topologically, residues 1 to 18 (MADICPSRSEPTLSFTQG) are lumenal. A helical transmembrane segment spans residues 19–39 (LILGQLSVVLLLAAFIKFFIF). The Cytoplasmic portion of the chain corresponds to 40-415 (GDPPSPEVVA…MPGSMPGSMP (376 aa)). The region spanning 114–330 (QPESLDWFNV…EPRFQEIALP (217 aa)) is the SMP-LTD domain. A compositionally biased stretch (basic and acidic residues) spans 373 to 389 (IEAEAHGGADRVPDSLR). Positions 373–415 (IEAEAHGGADRVPDSLRYRHRPRADEEFPGAGSMPGSMPGSMP) are disordered. Low complexity predominate over residues 404-415 (GSMPGSMPGSMP).

The protein belongs to the MMM1 family. In terms of assembly, homodimer. Component of the ER-mitochondria encounter structure (ERMES) or MDM complex, composed of mmm-1, mdm10, mdm12 and mdm34. A mmm-1 homodimer associates with one molecule of mdm12 on each side in a pairwise head-to-tail manner, and the SMP-LTD domains of mmm-1 and mdm12 generate a continuous hydrophobic tunnel for phospholipid trafficking.

The protein localises to the endoplasmic reticulum membrane. In terms of biological role, component of the ERMES/MDM complex, which serves as a molecular tether to connect the endoplasmic reticulum (ER) and mitochondria. Components of this complex are involved in the control of mitochondrial shape and protein biogenesis, and function in nonvesicular lipid trafficking between the ER and mitochondria. The mdm12-mmm-1 subcomplex functions in the major beta-barrel assembly pathway that is responsible for biogenesis of all outer membrane beta-barrel proteins, and acts in a late step after the SAM complex. The mdm10-mdm12-mmm-1 subcomplex further acts in the TOM40-specific pathway after the action of the mdm12-mmm-1 complex. Essential for establishing and maintaining the structure of mitochondria and maintenance of mtDNA nucleoids. This chain is Maintenance of mitochondrial morphology protein 1 (mmm-1), found in Neurospora crassa (strain ATCC 24698 / 74-OR23-1A / CBS 708.71 / DSM 1257 / FGSC 987).